The chain runs to 257 residues: Sulfur carrier protein FdhD (257 aa).

The active-site Cysteine persulfide intermediate is C105.

This sequence belongs to the FdhD family.

It localises to the cytoplasm. In terms of biological role, required for formate dehydrogenase (FDH) activity. Acts as a sulfur carrier protein that transfers sulfur from IscS to the molybdenum cofactor prior to its insertion into FDH. This chain is Sulfur carrier protein FdhD, found in Saccharolobus solfataricus (strain ATCC 35092 / DSM 1617 / JCM 11322 / P2) (Sulfolobus solfataricus).